The chain runs to 427 residues: Trigger factor (427 aa).

A PPIase FKBP-type domain is found at 163–248 (GDTVVIDFVG…IHEVKTKEVP (86 aa)).

The protein belongs to the FKBP-type PPIase family. Tig subfamily.

Its subcellular location is the cytoplasm. It carries out the reaction [protein]-peptidylproline (omega=180) = [protein]-peptidylproline (omega=0). In terms of biological role, involved in protein export. Acts as a chaperone by maintaining the newly synthesized protein in an open conformation. Functions as a peptidyl-prolyl cis-trans isomerase. The chain is Trigger factor from Streptococcus agalactiae serotype V (strain ATCC BAA-611 / 2603 V/R).